The following is a 100-amino-acid chain: MFAIFQTGGKQYKVQQGEKIYVEKLDLEVGSKISFDQVIMVEGSVGTPFVKNAVVNATVIKQGKQKKINIIKFKSKKHHLKRQGHRQPYTQLVIDSISVK.

It belongs to the bacterial ribosomal protein bL21 family. As to quaternary structure, part of the 50S ribosomal subunit. Contacts protein L20.

Its function is as follows. This protein binds to 23S rRNA in the presence of protein L20. In Ureaplasma parvum serovar 3 (strain ATCC 27815 / 27 / NCTC 11736), this protein is Large ribosomal subunit protein bL21.